The chain runs to 554 residues: Dihydroxy-acid dehydratase (554 aa).

Aspartate 78 is a binding site for Mg(2+). Cysteine 119 is a [2Fe-2S] cluster binding site. Aspartate 120 and lysine 121 together coordinate Mg(2+). Lysine 121 carries the post-translational modification N6-carboxylysine. Cysteine 191 serves as a coordination point for [2Fe-2S] cluster. Position 444 (glutamate 444) interacts with Mg(2+). The active-site Proton acceptor is the serine 470.

This sequence belongs to the IlvD/Edd family. In terms of assembly, homodimer. [2Fe-2S] cluster serves as cofactor. Mg(2+) is required as a cofactor.

It catalyses the reaction (2R)-2,3-dihydroxy-3-methylbutanoate = 3-methyl-2-oxobutanoate + H2O. The enzyme catalyses (2R,3R)-2,3-dihydroxy-3-methylpentanoate = (S)-3-methyl-2-oxopentanoate + H2O. Its pathway is amino-acid biosynthesis; L-isoleucine biosynthesis; L-isoleucine from 2-oxobutanoate: step 3/4. The protein operates within amino-acid biosynthesis; L-valine biosynthesis; L-valine from pyruvate: step 3/4. Its function is as follows. Functions in the biosynthesis of branched-chain amino acids. Catalyzes the dehydration of (2R,3R)-2,3-dihydroxy-3-methylpentanoate (2,3-dihydroxy-3-methylvalerate) into 2-oxo-3-methylpentanoate (2-oxo-3-methylvalerate) and of (2R)-2,3-dihydroxy-3-methylbutanoate (2,3-dihydroxyisovalerate) into 2-oxo-3-methylbutanoate (2-oxoisovalerate), the penultimate precursor to L-isoleucine and L-valine, respectively. The chain is Dihydroxy-acid dehydratase from Nitratidesulfovibrio vulgaris (strain ATCC 29579 / DSM 644 / CCUG 34227 / NCIMB 8303 / VKM B-1760 / Hildenborough) (Desulfovibrio vulgaris).